A 367-amino-acid polypeptide reads, in one-letter code: Alginate lyase (367 aa).

Positions 1-27 are cleaved as a signal peptide; it reads MKTSHLIRIALPGALAAALLASQVSQA. Residues 65–66, 138–139, and tyrosine 256 each bind substrate; these read SK and HT.

The protein belongs to the polysaccharide lyase 5 family.

It is found in the periplasm. It catalyses the reaction Eliminative cleavage of alginate to give oligosaccharides with 4-deoxy-alpha-L-erythro-hex-4-enuronosyl groups at their non-reducing ends and beta-D-mannuronate at their reducing end.. Catalyzes the depolymerization of alginate by cleaving the beta-1,4 glycosidic bond between two adjacent sugar residues via a beta-elimination mechanism. May serve to degrade mislocalized alginate that is trapped in the periplasmic space. This chain is Alginate lyase, found in Pseudomonas aeruginosa (strain LESB58).